Reading from the N-terminus, the 316-residue chain is tRNA dimethylallyltransferase (316 aa).

Gly-17–Thr-24 lines the ATP pocket. Thr-19 to Thr-24 is a substrate binding site. Interaction with substrate tRNA stretches follow at residues Asp-42–Leu-45, Gln-166–Arg-170, and Arg-247–Arg-252.

It belongs to the IPP transferase family. As to quaternary structure, monomer. Requires Mg(2+) as cofactor.

The catalysed reaction is adenosine(37) in tRNA + dimethylallyl diphosphate = N(6)-dimethylallyladenosine(37) in tRNA + diphosphate. Functionally, catalyzes the transfer of a dimethylallyl group onto the adenine at position 37 in tRNAs that read codons beginning with uridine, leading to the formation of N6-(dimethylallyl)adenosine (i(6)A). The chain is tRNA dimethylallyltransferase from Salmonella paratyphi C (strain RKS4594).